The following is a 481-amino-acid chain: Sulfate adenylyltransferase subunit 1 (481 aa).

The 215-residue stretch at 22-236 folds into the tr-type G domain; that stretch reads KDLLRFITCG…LLDSIRLDAD (215 aa). The tract at residues 31–38 is G1; the sequence is GSVDDGKS. Residue 31–38 coordinates GTP; the sequence is GSVDDGKS. The G2 stretch occupies residues 89–93; the sequence is GITID. Residues 110 to 113 are G3; sequence DCPG. GTP is bound by residues 110–114 and 165–168; these read DCPGH and NKMD. Residues 165–168 form a G4 region; it reads NKMD. Residues 202–204 form a G5 region; that stretch reads SAL.

It belongs to the TRAFAC class translation factor GTPase superfamily. Classic translation factor GTPase family. CysN/NodQ subfamily. As to quaternary structure, heterodimer composed of CysD, the smaller subunit, and CysN.

It carries out the reaction sulfate + ATP + H(+) = adenosine 5'-phosphosulfate + diphosphate. It participates in sulfur metabolism; hydrogen sulfide biosynthesis; sulfite from sulfate: step 1/3. Functionally, with CysD forms the ATP sulfurylase (ATPS) that catalyzes the adenylation of sulfate producing adenosine 5'-phosphosulfate (APS) and diphosphate, the first enzymatic step in sulfur assimilation pathway. APS synthesis involves the formation of a high-energy phosphoric-sulfuric acid anhydride bond driven by GTP hydrolysis by CysN coupled to ATP hydrolysis by CysD. The chain is Sulfate adenylyltransferase subunit 1 from Laribacter hongkongensis (strain HLHK9).